The following is a 99-amino-acid chain: NADH-ubiquinone oxidoreductase chain 2 (99 aa).

2 consecutive transmembrane segments (helical) span residues 22-42 (FLTFIGILLSGITAFYYIQII) and 65-85 (VMISITTLLLILFFADNSIFI).

Belongs to the complex I subunit 2 family.

It is found in the mitochondrion inner membrane. The enzyme catalyses a ubiquinone + NADH + 5 H(+)(in) = a ubiquinol + NAD(+) + 4 H(+)(out). Functionally, core subunit of the mitochondrial membrane respiratory chain NADH dehydrogenase (Complex I) that is believed to belong to the minimal assembly required for catalysis. Complex I functions in the transfer of electrons from NADH to the respiratory chain. The immediate electron acceptor for the enzyme is believed to be ubiquinone. This chain is NADH-ubiquinone oxidoreductase chain 2 (ND2), found in Cyanidium caldarium (Red alga).